The chain runs to 439 residues: Type I secretion system membrane fusion protein PrsE (439 aa).

A helical transmembrane segment spans residues L20–T40.

Belongs to the membrane fusion protein (MFP) (TC 8.A.1) family. In terms of assembly, part of a type I secretion system composed of PrsD and PrsE.

The protein resides in the cell inner membrane. In terms of biological role, mediates secretion of glycanase ExsH. The polypeptide is Type I secretion system membrane fusion protein PrsE (prsE) (Rhizobium meliloti (strain 1021) (Ensifer meliloti)).